A 160-amino-acid polypeptide reads, in one-letter code: MTFVTCDLCDDNADSVCVVTGLNWLSYGGRDAFGGEIVTVKCFEDNSRVKEHLGTDGKGKVLVVDGGGSLRNALIGDMIAENAVKNGWEGVIIYGACRDVDALAKLDIGVITLGCVPIKSVRRDEGQLNIEITFGGVVFRPGEFVYADNNGIITAPKALV.

Substrate contacts are provided by residues 76–79 and R98; that span reads GDMI. Position 99 (D99) interacts with a divalent metal cation.

The protein belongs to the class II aldolase/RraA-like family. As to quaternary structure, homotrimer. A divalent metal cation is required as a cofactor.

It carries out the reaction 4-hydroxy-4-methyl-2-oxoglutarate = 2 pyruvate. The enzyme catalyses oxaloacetate + H(+) = pyruvate + CO2. Its function is as follows. Catalyzes the aldol cleavage of 4-hydroxy-4-methyl-2-oxoglutarate (HMG) into 2 molecules of pyruvate. Also contains a secondary oxaloacetate (OAA) decarboxylase activity due to the common pyruvate enolate transition state formed following C-C bond cleavage in the retro-aldol and decarboxylation reactions. The polypeptide is Putative 4-hydroxy-4-methyl-2-oxoglutarate aldolase (Alcanivorax borkumensis (strain ATCC 700651 / DSM 11573 / NCIMB 13689 / SK2)).